We begin with the raw amino-acid sequence, 121 residues long: Large ribosomal subunit protein uL18 (121 aa).

The protein belongs to the universal ribosomal protein uL18 family. Part of the 50S ribosomal subunit; part of the 5S rRNA/L5/L18/L25 subcomplex. Contacts the 5S and 23S rRNAs.

This is one of the proteins that bind and probably mediate the attachment of the 5S RNA into the large ribosomal subunit, where it forms part of the central protuberance. In Verminephrobacter eiseniae (strain EF01-2), this protein is Large ribosomal subunit protein uL18.